Here is a 390-residue protein sequence, read N- to C-terminus: Guanine nucleotide exchange factor for Rab-3A (390 aa).

The disordered stretch occupies residues Met-1 to Asp-60. A compositionally biased stretch (low complexity) spans Pro-40–Gln-58. A coiled-coil region spans residues Glu-73–Val-161. Residues Pro-166–Ser-194 form a disordered region. Ser-168 and Ser-179 each carry phosphoserine. A compositionally biased stretch (basic residues) spans Gly-184–Ser-194.

It belongs to the SEC2 family. Interacts with RAB3A and IHPK1 through the coiled-coil domain. This interaction is competitive. IHPK1 kinase activity is not required for this interaction.

Functionally, guanine nucleotide exchange factor (GEF) which may activate RAB3A, a GTPase that regulates synaptic vesicle exocytosis. Promotes the exchange of GDP to GTP, converting inactive GDP-bound Rab proteins into their active GTP-bound form. May also activate RAB8A and RAB8B. This chain is Guanine nucleotide exchange factor for Rab-3A (RAB3IL1), found in Bos taurus (Bovine).